The primary structure comprises 91 residues: PqqA binding protein (91 aa).

Belongs to the PqqD family. As to quaternary structure, monomer. Interacts with PqqE.

It participates in cofactor biosynthesis; pyrroloquinoline quinone biosynthesis. Its function is as follows. Functions as a PqqA binding protein and presents PqqA to PqqE, in the pyrroloquinoline quinone (PQQ) biosynthetic pathway. In Pseudomonas fluorescens (strain SBW25), this protein is PqqA binding protein.